Consider the following 186-residue polypeptide: TATA box-binding protein-like 1 (186 aa).

This sequence belongs to the TBP family. In terms of assembly, binds TFIIA and TFIIB.

The protein localises to the cytoplasm. It is found in the nucleus. Functionally, part of a specialized transcription system that mediates the transcription of most ribosomal proteins through the 5'-TCT-3' motif which is a core promoter element at these genes. Seems to also mediate the transcription of NF1. Does not bind the TATA box. The polypeptide is TATA box-binding protein-like 1 (TBPL1) (Bos taurus (Bovine)).